The following is a 74-amino-acid chain: Ferredoxin MycCII (74 aa).

Positions 1 to 29 constitute a 4Fe-4S ferredoxin-type domain; the sequence is MRIVLDAERCVGAGQCEATAPELFTQGDD. Residues Cys-10, Cys-16, and Cys-54 each coordinate [3Fe-4S] cluster.

The cofactor is [3Fe-4S] cluster.

Its pathway is antibiotic biosynthesis; mycinamicin biosynthesis. Specific electron transport protein capable of effectively supporting cytochrome P450 MycCI activity in the biosynthesis of mycinamicin, a 16-membered macrolide antibiotic. The chain is Ferredoxin MycCII from Micromonospora griseorubida.